The sequence spans 247 residues: MSKEPDRLFAQPLPQVPDFAFNEDVVRVFPDMIKRSVPGYPTIVENLGVLAAQFAQPHSVLYDLGSSLGAVTQALRRHVRTDGCRVIAVDNSAAMVERCREYLNGQDSMFQELLPVEVIEGDILALQFAPASVVALNFTLQFIAPDERLALLSRIRQSLLPGGALILSEKLRFNDPEEHALLTDLHIAFKRANGYSELEIAQKRSAIENVMKPDSLEEHRERLLAAGFSTVVPWFQCLNFASLIALP.

S-adenosyl-L-methionine is bound by residues tyrosine 40, 65-67 (GSS), 90-91 (DN), 122-123 (DI), asparagine 137, and arginine 204.

This sequence belongs to the class I-like SAM-binding methyltransferase superfamily. Cx-SAM synthase family. In terms of assembly, homodimer.

It carries out the reaction prephenate + S-adenosyl-L-methionine = carboxy-S-adenosyl-L-methionine + 3-phenylpyruvate + H2O. Functionally, catalyzes the conversion of S-adenosyl-L-methionine (SAM) to carboxy-S-adenosyl-L-methionine (Cx-SAM). The protein is Carboxy-S-adenosyl-L-methionine synthase of Pseudomonas fluorescens (strain SBW25).